Consider the following 390-residue polypeptide: uncharacterized protein (390 aa).

The region spanning 215-325 (SRFKRKTLGK…KLIKDCEMVE (111 aa)) is the Glutaredoxin domain.

This is an uncharacterized protein from Arabidopsis thaliana (Mouse-ear cress).